The primary structure comprises 217 residues: Ribose-5-phosphate isomerase A (217 aa).

Residues 28–31 (TGST), 81–84 (DGAD), and 94–97 (KGGG) contribute to the substrate site. Glutamate 103 acts as the Proton acceptor in catalysis. Lysine 121 lines the substrate pocket.

The protein belongs to the ribose 5-phosphate isomerase family. Homodimer.

It catalyses the reaction aldehydo-D-ribose 5-phosphate = D-ribulose 5-phosphate. Its pathway is carbohydrate degradation; pentose phosphate pathway; D-ribose 5-phosphate from D-ribulose 5-phosphate (non-oxidative stage): step 1/1. Functionally, catalyzes the reversible conversion of ribose-5-phosphate to ribulose 5-phosphate. This chain is Ribose-5-phosphate isomerase A, found in Aeromonas hydrophila subsp. hydrophila (strain ATCC 7966 / DSM 30187 / BCRC 13018 / CCUG 14551 / JCM 1027 / KCTC 2358 / NCIMB 9240 / NCTC 8049).